A 327-amino-acid chain; its full sequence is Geranylgeranyl transferase type-2 subunit alpha (327 aa).

PFTA repeat units lie at residues 44 to 78 (YSIE…SLAS), 84 to 118 (FWDK…HYPT), 123 to 157 (VWQT…NIES), 163 to 197 (LDKE…RMFQ), and 207 to 241 (YIRT…NDIV).

The protein belongs to the protein prenyltransferase subunit alpha family. As to quaternary structure, heterodimer of an alpha and a beta subunit.

The enzyme catalyses geranylgeranyl diphosphate + L-cysteinyl-[protein] = S-geranylgeranyl-L-cysteinyl-[protein] + diphosphate. Catalyzes the transfer of a geranyl-geranyl moiety from geranyl-geranyl pyrophosphate to proteins having the C-terminal -XCC or -XCXC, where both cysteines may become modified. Acts on YPT1 and SEC4. This is Geranylgeranyl transferase type-2 subunit alpha (BET4) from Saccharomyces cerevisiae (strain ATCC 204508 / S288c) (Baker's yeast).